Reading from the N-terminus, the 245-residue chain is Ribosome maturation factor RimP (245 aa).

This sequence belongs to the RimP family.

It is found in the cytoplasm. Functionally, required for maturation of 30S ribosomal subunits. The polypeptide is Ribosome maturation factor RimP (Verminephrobacter eiseniae (strain EF01-2)).